We begin with the raw amino-acid sequence, 150 residues long: UPF0208 membrane protein VV1_2222 (150 aa).

Helical transmembrane passes span 42–62 (FGIK…MAFN) and 70–90 (AIVM…WLGH).

Belongs to the UPF0208 family.

The protein localises to the cell inner membrane. In Vibrio vulnificus (strain CMCP6), this protein is UPF0208 membrane protein VV1_2222.